The primary structure comprises 324 residues: Olfactory receptor 5A2 (324 aa).

At Met-1–Ile-26 the chain is on the extracellular side. Asn-6 carries N-linked (GlcNAc...) asparagine glycosylation. Residues Phe-27 to Ile-47 traverse the membrane as a helical segment. Residues Ala-48–His-55 are Cytoplasmic-facing. Residues Leu-56–Ser-76 traverse the membrane as a helical segment. Residues Ser-77 to Thr-100 are Extracellular-facing. Cysteines 98 and 190 form a disulfide. Residues Gln-101–Tyr-121 form a helical membrane-spanning segment. The Cytoplasmic portion of the chain corresponds to Asp-122–Thr-134. Residues Val-135 to Leu-155 traverse the membrane as a helical segment. Topologically, residues Ser-156–Glu-197 are extracellular. Residues Val-198–Ser-218 traverse the membrane as a helical segment. The Cytoplasmic segment spans residues Tyr-219–Ala-238. Residues Phe-239 to Met-259 traverse the membrane as a helical segment. At Tyr-260–Asp-272 the chain is on the extracellular side. The helical transmembrane segment at Lys-273 to Phe-293 threads the bilayer. Residues Arg-294–Gly-324 lie on the Cytoplasmic side of the membrane.

Belongs to the G-protein coupled receptor 1 family.

The protein localises to the cell membrane. Odorant receptor. The chain is Olfactory receptor 5A2 (OR5A2) from Homo sapiens (Human).